A 352-amino-acid polypeptide reads, in one-letter code: Alanine racemase (352 aa).

The active-site Proton acceptor; specific for D-alanine is the Lys33. An N6-(pyridoxal phosphate)lysine modification is found at Lys33. Position 129 (Arg129) interacts with substrate. Tyr250 (proton acceptor; specific for L-alanine) is an active-site residue. Position 298 (Met298) interacts with substrate.

It belongs to the alanine racemase family. Pyridoxal 5'-phosphate is required as a cofactor.

It carries out the reaction L-alanine = D-alanine. It functions in the pathway amino-acid biosynthesis; D-alanine biosynthesis; D-alanine from L-alanine: step 1/1. In terms of biological role, catalyzes the interconversion of L-alanine and D-alanine. May also act on other amino acids. This chain is Alanine racemase (alr), found in Neisseria gonorrhoeae (strain ATCC 700825 / FA 1090).